A 165-amino-acid polypeptide reads, in one-letter code: Small ribosomal subunit protein uS17m (165 aa).

Belongs to the universal ribosomal protein uS17 family. As to quaternary structure, component of the mitochondrial small ribosomal subunit (mt-SSU). Mature N.crassa 74S mitochondrial ribosomes consist of a small (37S) and a large (54S) subunit. The 37S small subunit contains a 16S ribosomal RNA (16S mt-rRNA) and 32 different proteins. The 54S large subunit contains a 23S rRNA (23S mt-rRNA) and 42 different proteins. uS17m interacts with the F(1)-ATPase inhibitor IF(1) dimer.

The protein resides in the mitochondrion. Functionally, component of the mitochondrial ribosome (mitoribosome), a dedicated translation machinery responsible for the synthesis of mitochondrial genome-encoded proteins, including at least some of the essential transmembrane subunits of the mitochondrial respiratory chain. The mitoribosomes are attached to the mitochondrial inner membrane and translation products are cotranslationally integrated into the membrane. The protein is Small ribosomal subunit protein uS17m (mrps17) of Neurospora crassa (strain ATCC 24698 / 74-OR23-1A / CBS 708.71 / DSM 1257 / FGSC 987).